The sequence spans 319 residues: UDP-3-O-acylglucosamine N-acyltransferase (319 aa).

H230 serves as the catalytic Proton acceptor.

The protein belongs to the transferase hexapeptide repeat family. LpxD subfamily. Homotrimer.

It carries out the reaction a UDP-3-O-[(3R)-3-hydroxyacyl]-alpha-D-glucosamine + a (3R)-hydroxyacyl-[ACP] = a UDP-2-N,3-O-bis[(3R)-3-hydroxyacyl]-alpha-D-glucosamine + holo-[ACP] + H(+). It functions in the pathway bacterial outer membrane biogenesis; LPS lipid A biosynthesis. Its function is as follows. Catalyzes the N-acylation of UDP-3-O-acylglucosamine using 3-hydroxyacyl-ACP as the acyl donor. Is involved in the biosynthesis of lipid A, a phosphorylated glycolipid that anchors the lipopolysaccharide to the outer membrane of the cell. The protein is UDP-3-O-acylglucosamine N-acyltransferase of Campylobacter lari (strain RM2100 / D67 / ATCC BAA-1060).